We begin with the raw amino-acid sequence, 379 residues long: Glucose-insensitive transcription protein 7 (379 aa).

The CS domain occupies 181-272 (SNRIRYDWSQ…VSEIKWEALV (92 aa)). The region spanning 292–379 (ASGNTKNKAK…PPQGMEPKKF (88 aa)) is the SGS domain. The interval 345–379 (SYTESNGTALSTNWKDVKSKTFETKPPQGMEPKKF) is disordered. Residues 346–358 (YTESNGTALSTNW) are compositionally biased toward polar residues.

Functionally, involved in cyclic AMP (cAMP) pathway, possibly by participating in the assembly or the conformational activation of specific multiprotein complexes. The polypeptide is Glucose-insensitive transcription protein 7 (git7) (Schizosaccharomyces pombe (strain 972 / ATCC 24843) (Fission yeast)).